Consider the following 525-residue polypeptide: Major capsid protein L1 (525 aa).

The protein belongs to the papillomaviridae L1 protein family. Self-assembles into homopentamers. The capsid has an icosahedral symmetry and consists of 72 capsomers, with each capsomer being a pentamer of L1. Interacts with the minor capsid protein L2; this interaction is necessary for viral genome encapsidation. Interacts with protein E2; this interaction enhances E2-dependent replication and transcription activation.

The protein resides in the virion. The protein localises to the host nucleus. Its function is as follows. Forms an icosahedral capsid with a T=7 symmetry and a 50 nm diameter. The capsid is composed of 72 pentamers linked to each other by disulfide bonds and associated with L2 proteins. Binds to heparan sulfate proteoglycans on cell surface of basal layer keratinocytes to provide initial virion attachment. This binding mediates a conformational change in the virus capsid that facilitates efficient infection. The virion enters the host cell via endocytosis. During virus trafficking, L1 protein dissociates from the viral DNA and the genomic DNA is released to the host nucleus. The virion assembly takes place within the cell nucleus. Encapsulates the genomic DNA together with protein L2. This Human papillomavirus type 5b protein is Major capsid protein L1.